The primary structure comprises 227 residues: DNA utilization protein YhgH (227 aa).

Belongs to the ComF/GntX family.

Functionally, required for the use of extracellular DNA as a nutrient. Has been suggested to be involved in gluconate metabolism. The protein is DNA utilization protein YhgH of Escherichia coli (strain K12).